A 499-amino-acid chain; its full sequence is 2-isopropylmalate synthase (499 aa).

Residues 5 to 267 (IKIFDTTLRD…ETGINLGEIA (263 aa)) enclose the Pyruvate carboxyltransferase domain. Mn(2+) is bound by residues Asp14, His202, His204, and Asn238. The interval 391–499 (SVEVLHVISG…YLSALNRIRR (109 aa)) is regulatory domain.

Belongs to the alpha-IPM synthase/homocitrate synthase family. LeuA type 1 subfamily. Requires Mn(2+) as cofactor.

Its subcellular location is the cytoplasm. It carries out the reaction 3-methyl-2-oxobutanoate + acetyl-CoA + H2O = (2S)-2-isopropylmalate + CoA + H(+). It participates in amino-acid biosynthesis; L-leucine biosynthesis; L-leucine from 3-methyl-2-oxobutanoate: step 1/4. Its function is as follows. Catalyzes the condensation of the acetyl group of acetyl-CoA with 3-methyl-2-oxobutanoate (2-ketoisovalerate) to form 3-carboxy-3-hydroxy-4-methylpentanoate (2-isopropylmalate). This is 2-isopropylmalate synthase from Pyrococcus furiosus (strain ATCC 43587 / DSM 3638 / JCM 8422 / Vc1).